A 395-amino-acid chain; its full sequence is Elongation factor Tu (395 aa).

The region spanning 10-204 (KPHVNVGTIG…AVDEYIPEPT (195 aa)) is the tr-type G domain. A G1 region spans residues 19–26 (GHVDHGKT). A GTP-binding site is contributed by 19 to 26 (GHVDHGKT). Position 26 (Thr26) interacts with Mg(2+). The interval 60-64 (GITIA) is G2. The segment at 81–84 (DCPG) is G3. Residues 81–85 (DCPGH) and 136–139 (NKVD) each bind GTP. A G4 region spans residues 136 to 139 (NKVD). Positions 174 to 176 (SAL) are G5.

The protein belongs to the TRAFAC class translation factor GTPase superfamily. Classic translation factor GTPase family. EF-Tu/EF-1A subfamily. As to quaternary structure, monomer.

It is found in the cytoplasm. The catalysed reaction is GTP + H2O = GDP + phosphate + H(+). Functionally, GTP hydrolase that promotes the GTP-dependent binding of aminoacyl-tRNA to the A-site of ribosomes during protein biosynthesis. The sequence is that of Elongation factor Tu from Exiguobacterium sibiricum (strain DSM 17290 / CCUG 55495 / CIP 109462 / JCM 13490 / 255-15).